The chain runs to 430 residues: Dihydroorotase (430 aa).

Zn(2+) is bound by residues H60 and H62. Substrate contacts are provided by residues 62-64 (HFR) and N94. Residues D151, H178, and H231 each coordinate Zn(2+). N277 contacts substrate. D304 lines the Zn(2+) pocket. Residue D304 is part of the active site. Residues H308 and 322–323 (FG) each bind substrate.

It belongs to the metallo-dependent hydrolases superfamily. DHOase family. Class I DHOase subfamily. It depends on Zn(2+) as a cofactor.

The catalysed reaction is (S)-dihydroorotate + H2O = N-carbamoyl-L-aspartate + H(+). Its pathway is pyrimidine metabolism; UMP biosynthesis via de novo pathway; (S)-dihydroorotate from bicarbonate: step 3/3. Functionally, catalyzes the reversible cyclization of carbamoyl aspartate to dihydroorotate. In Carboxydothermus hydrogenoformans (strain ATCC BAA-161 / DSM 6008 / Z-2901), this protein is Dihydroorotase.